A 445-amino-acid polypeptide reads, in one-letter code: Probable cytosol aminopeptidase (445 aa).

Residues lysine 217 and aspartate 222 each contribute to the Mn(2+) site. Residue lysine 229 is part of the active site. Positions 240, 299, and 301 each coordinate Mn(2+). The active site involves arginine 303.

The protein belongs to the peptidase M17 family. Requires Mn(2+) as cofactor.

It localises to the cytoplasm. The catalysed reaction is Release of an N-terminal amino acid, Xaa-|-Yaa-, in which Xaa is preferably Leu, but may be other amino acids including Pro although not Arg or Lys, and Yaa may be Pro. Amino acid amides and methyl esters are also readily hydrolyzed, but rates on arylamides are exceedingly low.. It catalyses the reaction Release of an N-terminal amino acid, preferentially leucine, but not glutamic or aspartic acids.. Presumably involved in the processing and regular turnover of intracellular proteins. Catalyzes the removal of unsubstituted N-terminal amino acids from various peptides. The chain is Probable cytosol aminopeptidase (pepA) from Mycoplasma pneumoniae (strain ATCC 29342 / M129 / Subtype 1) (Mycoplasmoides pneumoniae).